The primary structure comprises 298 residues: Lipoyl synthase (298 aa).

[4Fe-4S] cluster is bound by residues Cys40, Cys45, Cys51, Cys67, Cys71, Cys74, and Ser280. Positions 53–269 (AVRKTATFMI…KEIALSKGFS (217 aa)) constitute a Radical SAM core domain.

It belongs to the radical SAM superfamily. Lipoyl synthase family. [4Fe-4S] cluster is required as a cofactor.

It localises to the cytoplasm. The enzyme catalyses [[Fe-S] cluster scaffold protein carrying a second [4Fe-4S](2+) cluster] + N(6)-octanoyl-L-lysyl-[protein] + 2 oxidized [2Fe-2S]-[ferredoxin] + 2 S-adenosyl-L-methionine + 4 H(+) = [[Fe-S] cluster scaffold protein] + N(6)-[(R)-dihydrolipoyl]-L-lysyl-[protein] + 4 Fe(3+) + 2 hydrogen sulfide + 2 5'-deoxyadenosine + 2 L-methionine + 2 reduced [2Fe-2S]-[ferredoxin]. It functions in the pathway protein modification; protein lipoylation via endogenous pathway; protein N(6)-(lipoyl)lysine from octanoyl-[acyl-carrier-protein]. Catalyzes the radical-mediated insertion of two sulfur atoms into the C-6 and C-8 positions of the octanoyl moiety bound to the lipoyl domains of lipoate-dependent enzymes, thereby converting the octanoylated domains into lipoylated derivatives. The sequence is that of Lipoyl synthase from Bacillus mycoides (strain KBAB4) (Bacillus weihenstephanensis).